The chain runs to 261 residues: Phosphatidylglycerol--prolipoprotein diacylglyceryl transferase (261 aa).

3 consecutive transmembrane segments (helical) span residues 20-40 (LAIH…VWLA), 54-74 (IIDF…LYYV), and 88-108 (IIAI…GAIV). Arg139 provides a ligand contact to a 1,2-diacyl-sn-glycero-3-phospho-(1'-sn-glycerol). 2 helical membrane passes run 175-195 (MPTF…VMVF) and 235-255 (ARVS…LFVY).

The protein belongs to the Lgt family.

It localises to the cell membrane. It catalyses the reaction L-cysteinyl-[prolipoprotein] + a 1,2-diacyl-sn-glycero-3-phospho-(1'-sn-glycerol) = an S-1,2-diacyl-sn-glyceryl-L-cysteinyl-[prolipoprotein] + sn-glycerol 1-phosphate + H(+). Its pathway is protein modification; lipoprotein biosynthesis (diacylglyceryl transfer). Functionally, catalyzes the transfer of the diacylglyceryl group from phosphatidylglycerol to the sulfhydryl group of the N-terminal cysteine of a prolipoprotein, the first step in the formation of mature lipoproteins. In Lactococcus lactis subsp. cremoris (strain MG1363), this protein is Phosphatidylglycerol--prolipoprotein diacylglyceryl transferase.